A 262-amino-acid polypeptide reads, in one-letter code: Phosphate import ATP-binding protein PstB (262 aa).

Residues 16-257 enclose the ABC transporter domain; sequence IDVRNLNFYY…PHRKETEDYI (242 aa). Position 48 to 55 (48 to 55) interacts with ATP; sequence GPSGCGKS.

This sequence belongs to the ABC transporter superfamily. Phosphate importer (TC 3.A.1.7) family. The complex is composed of two ATP-binding proteins (PstB), two transmembrane proteins (PstC and PstA) and a solute-binding protein (PstS).

It localises to the cell inner membrane. It catalyses the reaction phosphate(out) + ATP + H2O = ADP + 2 phosphate(in) + H(+). In terms of biological role, part of the ABC transporter complex PstSACB involved in phosphate import. Responsible for energy coupling to the transport system. This is Phosphate import ATP-binding protein PstB from Cupriavidus pinatubonensis (strain JMP 134 / LMG 1197) (Cupriavidus necator (strain JMP 134)).